A 341-amino-acid polypeptide reads, in one-letter code: Spore photoproduct lyase (341 aa).

The Radical SAM core domain maps to 76–304 (SKPSAEYAIP…ESKRKYKWGR (229 aa)). C90, C94, and C97 together coordinate [4Fe-4S] cluster. Residues 217–234 (QAARKVAGAGYKLGFVVA) constitute a DNA-binding region (H-T-H motif).

Belongs to the radical SAM superfamily. SPL family. Monomer or homodimer. Requires [4Fe-4S] cluster as cofactor. The cofactor is S-adenosyl-L-methionine.

It catalyses the reaction (5R)-5,6-dihydro-5-(thymidin-7-yl)thymidine in DNA = a thymidine dimer in DNA. Functionally, involved in repair of UV radiation-induced DNA damage during spore germination. Can repair thymine dimer 5-thyminyl-5,6-dihydrothymine (known as spore photoproduct (SP)) by in situ monomerization of SP to two thymines. The sequence is that of Spore photoproduct lyase (splG) from Geobacillus sp. (strain Y412MC61).